The primary structure comprises 259 residues: ATP synthase subunit b 3 (259 aa).

Residues 5 to 27 form a helical membrane-spanning segment; the sequence is WWTLGLQAINVLILIWILSRFLF.

It belongs to the ATPase B chain family. In terms of assembly, F-type ATPases have 2 components, F(1) - the catalytic core - and F(0) - the membrane proton channel. F(1) has five subunits: alpha(3), beta(3), gamma(1), delta(1), epsilon(1). F(0) has three main subunits: a(1), b(2) and c(10-14). The alpha and beta chains form an alternating ring which encloses part of the gamma chain. F(1) is attached to F(0) by a central stalk formed by the gamma and epsilon chains, while a peripheral stalk is formed by the delta and b chains.

Its subcellular location is the cell inner membrane. In terms of biological role, f(1)F(0) ATP synthase produces ATP from ADP in the presence of a proton or sodium gradient. F-type ATPases consist of two structural domains, F(1) containing the extramembraneous catalytic core and F(0) containing the membrane proton channel, linked together by a central stalk and a peripheral stalk. During catalysis, ATP synthesis in the catalytic domain of F(1) is coupled via a rotary mechanism of the central stalk subunits to proton translocation. Its function is as follows. Component of the F(0) channel, it forms part of the peripheral stalk, linking F(1) to F(0). This chain is ATP synthase subunit b 3, found in Beijerinckia indica subsp. indica (strain ATCC 9039 / DSM 1715 / NCIMB 8712).